Consider the following 123-residue polypeptide: Ribosome-binding factor A (123 aa).

Belongs to the RbfA family. In terms of assembly, monomer. Binds 30S ribosomal subunits, but not 50S ribosomal subunits or 70S ribosomes.

The protein localises to the cytoplasm. Its function is as follows. One of several proteins that assist in the late maturation steps of the functional core of the 30S ribosomal subunit. Associates with free 30S ribosomal subunits (but not with 30S subunits that are part of 70S ribosomes or polysomes). Required for efficient processing of 16S rRNA. May interact with the 5'-terminal helix region of 16S rRNA. The chain is Ribosome-binding factor A from Neisseria meningitidis serogroup A / serotype 4A (strain DSM 15465 / Z2491).